The primary structure comprises 112 residues: Integration host factor subunit alpha (112 aa).

It belongs to the bacterial histone-like protein family. Heterodimer of an alpha and a beta chain.

This protein is one of the two subunits of integration host factor, a specific DNA-binding protein that functions in genetic recombination as well as in transcriptional and translational control. The chain is Integration host factor subunit alpha from Agrobacterium fabrum (strain C58 / ATCC 33970) (Agrobacterium tumefaciens (strain C58)).